Reading from the N-terminus, the 315-residue chain is Trimethylguanosine synthase (315 aa).

Residues 1-58 form a required for correct nucleolar localization region; sequence MGRTFIHASKIKHAARKRKHHSNFRTLIKLLNNDAYKIESSKPLKNGKLFKYWKNRRR. Asp-126 lines the S-adenosyl-L-methionine pocket. Residues 271-315 form a disordered region; sequence TENSRRESSEKEELSSENEELSKRKKHESTTTTKDNTVDIYDVNG. A compositionally biased stretch (basic and acidic residues) spans 273–284; it reads NSRRESSEKEEL.

This sequence belongs to the methyltransferase superfamily. Trimethylguanosine synthase family. In terms of assembly, monomer. Interacts with the spliceosomal snRNP core component SMB1 and the snoRNP components CBF5 and NOP58.

The protein localises to the nucleus. It localises to the nucleolus. The enzyme catalyses a 5'-end (N(7)-methyl 5'-triphosphoguanosine)-ribonucleoside in snRNA + S-adenosyl-L-methionine = a 5'-end (N(2),N(7)-dimethyl 5'-triphosphoguanosine)-ribonucleoside in snRNA + S-adenosyl-L-homocysteine + H(+). It catalyses the reaction a 5'-end (N(7)-methyl 5'-triphosphoguanosine)-ribonucleoside in snoRNA + S-adenosyl-L-methionine = a 5'-end (N(2),N(7)-dimethyl 5'-triphosphoguanosine)-ribonucleoside in snoRNA + S-adenosyl-L-homocysteine + H(+). The catalysed reaction is a 5'-end (N(2),N(7)-dimethyl 5'-triphosphoguanosine)-ribonucleoside in snRNA + S-adenosyl-L-methionine = a 5'-end (N(2),N(2),N(7)-trimethyl 5'-triphosphoguanosine)-ribonucleoside in snRNA + S-adenosyl-L-homocysteine + H(+). It carries out the reaction a 5'-end (N(2),N(7)-dimethyl 5'-triphosphoguanosine)-ribonucleoside in snoRNA + S-adenosyl-L-methionine = a 5'-end (N(2),N(2),N(7)-trimethyl 5'-triphosphoguanosine)-ribonucleoside in snoRNA + S-adenosyl-L-homocysteine + H(+). With respect to regulation, substrate inhibited by S-adenosyl-L-homocysteine. Catalyzes the two serial methylation steps for the conversion of the 7-monomethylguanosine (m(7)G) caps of snRNAs and snoRNAs to a 2,2,7-trimethylguanosine (m(2,2,7)G) cap structure. The enzyme is specific for guanine, and N7 methylation must precede N2 methylation. Hypermethylates the m3G cap on TLC1 telomerase which affects telomere silencing and telomere length regulation. Required for pre-mRNA splicing, pre-rRNA processing and small ribosomal subunit synthesis. Involved in nucleolar structural organization. This is Trimethylguanosine synthase (TGS1) from Saccharomyces cerevisiae (strain ATCC 204508 / S288c) (Baker's yeast).